The primary structure comprises 226 residues: PKHD-type hydroxylase Plav_0377 (226 aa).

Residues 78–178 enclose the Fe2OG dioxygenase domain; it reads KVLPPRFNRY…RLASFFWVQS (101 aa). Residues histidine 96, aspartate 98, and histidine 159 each coordinate Fe cation. Arginine 169 contributes to the 2-oxoglutarate binding site.

Requires Fe(2+) as cofactor. L-ascorbate serves as cofactor.

The polypeptide is PKHD-type hydroxylase Plav_0377 (Parvibaculum lavamentivorans (strain DS-1 / DSM 13023 / NCIMB 13966)).